The primary structure comprises 370 residues: 3-dehydroquinate synthase (370 aa).

NAD(+)-binding positions include 112 to 116 (GVVGD), 136 to 137 (TS), lysine 149, lysine 158, and 176 to 179 (TLRT). Zn(2+) contacts are provided by glutamate 191, histidine 254, and histidine 276.

The protein belongs to the sugar phosphate cyclases superfamily. Dehydroquinate synthase family. Co(2+) serves as cofactor. Requires Zn(2+) as cofactor. NAD(+) is required as a cofactor.

It is found in the cytoplasm. The catalysed reaction is 7-phospho-2-dehydro-3-deoxy-D-arabino-heptonate = 3-dehydroquinate + phosphate. It functions in the pathway metabolic intermediate biosynthesis; chorismate biosynthesis; chorismate from D-erythrose 4-phosphate and phosphoenolpyruvate: step 2/7. In terms of biological role, catalyzes the conversion of 3-deoxy-D-arabino-heptulosonate 7-phosphate (DAHP) to dehydroquinate (DHQ). This chain is 3-dehydroquinate synthase, found in Xanthomonas oryzae pv. oryzae (strain MAFF 311018).